The primary structure comprises 175 residues: Large ribosomal subunit protein uL10 (175 aa).

This sequence belongs to the universal ribosomal protein uL10 family. As to quaternary structure, part of the ribosomal stalk of the 50S ribosomal subunit. The N-terminus interacts with L11 and the large rRNA to form the base of the stalk. The C-terminus forms an elongated spine to which L12 dimers bind in a sequential fashion forming a multimeric L10(L12)X complex.

Functionally, forms part of the ribosomal stalk, playing a central role in the interaction of the ribosome with GTP-bound translation factors. This is Large ribosomal subunit protein uL10 from Methylobacterium nodulans (strain LMG 21967 / CNCM I-2342 / ORS 2060).